The following is a 444-amino-acid chain: tRNA (guanine-N(7)-)-methyltransferase non-catalytic subunit TRM82 (444 aa).

WD repeat units lie at residues 1 to 47 (MSVI…WSDD), 48 to 99 (FDKI…LGAP), 100 to 147 (PIYS…KRFC), 148 to 192 (FSKR…EPIL), 193 to 237 (GHVS…DKWL), 238 to 279 (FGHK…STFD), and 308 to 354 (FAVS…ITFP). The tract at residues 55–92 (RNTTAKEQQGQSSENENENKKLKSNKGDSIKRTAAKVP) is disordered. Positions 71 to 85 (NENKKLKSNKGDSIK) are enriched in basic and acidic residues. Position 93 is a phosphoserine (S93).

Belongs to the WD repeat TRM82 family. Forms a heterodimer with the catalytic subunit TRM8.

Its subcellular location is the nucleus. The protein operates within tRNA modification; N(7)-methylguanine-tRNA biosynthesis. Functionally, required for the formation of N(7)-methylguanine at position 46 (m7G46) in tRNA, a modification required to maintain stability of tRNAs; its absence resulting in tRNA decay. In the complex, it is required to stabilize and induce conformational changes of the catalytic subunit. The chain is tRNA (guanine-N(7)-)-methyltransferase non-catalytic subunit TRM82 from Saccharomyces cerevisiae (strain ATCC 204508 / S288c) (Baker's yeast).